Consider the following 170-residue polypeptide: Negative modulator of initiation of replication (170 aa).

The interaction with DNA stretch occupies residues 139-145 (NTNTGRK).

This sequence belongs to the SeqA family. As to quaternary structure, homodimer. Polymerizes to form helical filaments.

The protein localises to the cytoplasm. Functionally, negative regulator of replication initiation, which contributes to regulation of DNA replication and ensures that replication initiation occurs exactly once per chromosome per cell cycle. Binds to pairs of hemimethylated GATC sequences in the oriC region, thus preventing assembly of replication proteins and re-initiation at newly replicated origins. Repression is relieved when the region becomes fully methylated. In Tolumonas auensis (strain DSM 9187 / NBRC 110442 / TA 4), this protein is Negative modulator of initiation of replication.